A 78-amino-acid polypeptide reads, in one-letter code: Acyl carrier protein (78 aa).

Residues 2–77 (SDIADRVKKI…DAIKFLEKNS (76 aa)) enclose the Carrier domain. Position 37 is an O-(pantetheine 4'-phosphoryl)serine (serine 37).

It belongs to the acyl carrier protein (ACP) family. 4'-phosphopantetheine is transferred from CoA to a specific serine of apo-ACP by AcpS. This modification is essential for activity because fatty acids are bound in thioester linkage to the sulfhydryl of the prosthetic group.

It localises to the cytoplasm. Its pathway is lipid metabolism; fatty acid biosynthesis. Carrier of the growing fatty acid chain in fatty acid biosynthesis. The chain is Acyl carrier protein from Methylobacterium sp. (strain 4-46).